We begin with the raw amino-acid sequence, 890 residues long: Phosphotransferase RcsD (890 aa).

The Cytoplasmic portion of the chain corresponds to 1–21 (MRQKETTATTRFSLLPGSITR). Residues 22-42 (FFLLLIIVLLVTMGVMVQSAV) form a helical membrane-spanning segment. Residues 43-308 (NAWLKDKSYQ…GTLLLDTLQN (266 aa)) lie on the Periplasmic side of the membrane. A helical transmembrane segment spans residues 309–329 (ILLPLLLNIGLLALALFGYTT). The Cytoplasmic segment spans residues 330–890 (FRHFSSRSTE…DIDSYVKSLL (561 aa)). Residues 468 to 678 (NIGDALKEPA…RYSVHIKMLA (211 aa)) form a histidine-like kinase region. In terms of domain architecture, HPt spans 803–890 (AQLHASGYYA…DIDSYVKSLL (88 aa)). The residue at position 842 (His-842) is a Phosphohistidine.

It belongs to the RcsD family. Interacts with RcsC and RcsB. Has a higher affinity for RcsB than for RcsC. Phosphorylated by RcsC.

It localises to the cell inner membrane. In terms of biological role, component of the Rcs signaling system, which controls transcription of numerous genes. RcsD is a phosphotransfer intermediate between the sensor kinase RcsC and the response regulator RcsB. It acquires a phosphoryl group from RcsC and transfers it to RcsB. The system controls expression of genes involved in colanic acid capsule synthesis, biofilm formation and cell division. The protein is Phosphotransferase RcsD of Escherichia coli (strain K12).